The sequence spans 443 residues: Xaa-Pro dipeptidase (443 aa).

Mn(2+) contacts are provided by D246, D257, H339, E384, and E423.

The protein belongs to the peptidase M24B family. Bacterial-type prolidase subfamily. It depends on Mn(2+) as a cofactor.

It catalyses the reaction Xaa-L-Pro dipeptide + H2O = an L-alpha-amino acid + L-proline. Functionally, splits dipeptides with a prolyl residue in the C-terminal position. This Cronobacter sakazakii (strain ATCC BAA-894) (Enterobacter sakazakii) protein is Xaa-Pro dipeptidase.